Reading from the N-terminus, the 731-residue chain is T-cell activation Rho GTPase-activating protein (731 aa).

Positions 88–277 (QPLSIICGDS…FLIDNCFEIF (190 aa)) constitute a Rho-GAP domain. Disordered regions lie at residues 288-421 (TSDD…AEDP), 464-507 (SLDA…IKKH), and 641-662 (HHVEDSRHRGSKEPLPGHGLSP). Polar residues predominate over residues 299–311 (SDVSTLQNDSAYD). The segment covering 319–329 (SNSSSGISSPS) has biased composition (low complexity). The segment covering 380–399 (SMPSSQECLESRVTNQTLTK) has biased composition (polar residues). Residue Ser-400 is modified to Phosphoserine. A compositionally biased stretch (low complexity) spans 464–480 (SLDASSDSSPVASPSSP). 2 stretches are compositionally biased toward basic and acidic residues: residues 494-503 (KTEKGKPSRE) and 641-652 (HHVEDSRHRGSK).

May function as a GTPase-activating protein and may play important roles during T-cell activation. This Homo sapiens (Human) protein is T-cell activation Rho GTPase-activating protein (TAGAP).